Here is a 215-residue protein sequence, read N- to C-terminus: Short neuropeptide F (215 aa).

Positions 1–22 (MCRINFTTLSLILVLWSGSLMS) are cleaved as a signal peptide. The propeptide occupies 23–56 (EPSQNADGSIKGLYEYLLQREYAAPVSYADHQIK). Phenylalanine amide occurs at positions 69 and 101. Tryptophan 129 is subject to Tryptophan amide. Phenylalanine 157 carries the phenylalanine amide modification. Positions 160–215 (SDPSWAMFNEHQLDEQQFADATRQPSKTLRGDEPTSIESTEQVESEENSPSNMDEK) are excised as a propeptide. The segment at 173–215 (DEQQFADATRQPSKTLRGDEPTSIESTEQVESEENSPSNMDEK) is disordered.

It belongs to the NPY family.

It localises to the secreted. In terms of biological role, plays a role in controlling food intake and regulating body size. The chain is Short neuropeptide F from Aedes aegypti (Yellowfever mosquito).